Consider the following 742-residue polypeptide: 5-methyltetrahydropteroyltriglutamate--homocysteine methyltransferase (742 aa).

5-methyltetrahydropteroyltri-L-glutamate contacts are provided by residues 18–21 and K112; that span reads REWK. Residues 420–422 and E473 each bind L-homocysteine; that span reads IGS. Residues 420-422 and E473 each bind L-methionine; that span reads IGS. Residue W550 participates in 5-methyltetrahydropteroyltri-L-glutamate binding. Position 588 (D588) interacts with L-homocysteine. D588 provides a ligand contact to L-methionine. A 5-methyltetrahydropteroyltri-L-glutamate-binding site is contributed by E594. Zn(2+) contacts are provided by H630, C632, and E654. The active-site Proton donor is H683. C715 contributes to the Zn(2+) binding site.

Belongs to the vitamin-B12 independent methionine synthase family. Zn(2+) is required as a cofactor.

It catalyses the reaction 5-methyltetrahydropteroyltri-L-glutamate + L-homocysteine = tetrahydropteroyltri-L-glutamate + L-methionine. It functions in the pathway amino-acid biosynthesis; L-methionine biosynthesis via de novo pathway; L-methionine from L-homocysteine (MetE route): step 1/1. Functionally, catalyzes the transfer of a methyl group from 5-methyltetrahydrofolate to homocysteine resulting in methionine formation. The sequence is that of 5-methyltetrahydropteroyltriglutamate--homocysteine methyltransferase from Staphylococcus aureus (strain bovine RF122 / ET3-1).